The sequence spans 204 residues: HTH-type transcriptional activator BcrR (204 aa).

Over 1–81 the chain is Cytoplasmic; the sequence is MEFNEKLQQL…ETENRSNLKK (81 aa). One can recognise an HTH cro/C1-type domain in the interval 7-61; sequence LQQLRTGKNLTQEQLAEQLYVSRTAISKWESGKGYPNMESLKCISKFFSVTIDEL. The H-T-H motif DNA-binding region spans 18-37; sequence QEQLAEQLYVSRTAISKWES. Residues 82–102 traverse the membrane as a helical segment; that stretch reads IYNYIYGILDMMAVAFIFLPL. Residues 103-126 lie on the Extracellular side of the membrane; sequence YGNSVGGYVYAVNLLSFTATTPFN. A helical membrane pass occupies residues 127–147; that stretch reads LAVYWSAFAALIIIGIGKIIS. Residues 148-154 are Cytoplasmic-facing; it reads THLDKEK. A helical membrane pass occupies residues 155-175; sequence WGGIATKCSLTITALAVCFFA. At 176-181 the chain is on the extracellular side; that stretch reads AAREPY. A helical membrane pass occupies residues 182–202; the sequence is ITVLVFLLLIGKIFVWIKQMG. At 203–204 the chain is on the cytoplasmic side; that stretch reads MK.

It localises to the cell membrane. With respect to regulation, constitutively bound to the bcrABD promoter. Requires bacitracin for activation, probably through a conformational change, such as the oligomerization of inactive dimers to form active tetramers. In terms of biological role, functions both as a membrane-bound sensor and a transducer of bacitracin availability to activate transcription of the bcrABD operon in the presence of bacitracin. Binds specifically to two inverted repeat sequences on the bcrABD promoter, irrespective of bacitracin concentration. This Enterococcus faecalis (Streptococcus faecalis) protein is HTH-type transcriptional activator BcrR.